The primary structure comprises 141 residues: Cholinesterase (141 aa).

Asparagine 39 carries an N-linked (GlcNAc...) asparagine glycan. 49–50 (GG) serves as a coordination point for substrate. Residue serine 131 is the Acyl-ester intermediate of the active site. Phosphoserine is present on serine 131.

It belongs to the type-B carboxylesterase/lipase family. As to quaternary structure, homotetramer; disulfide-linked. Dimer of dimers. As to expression, present in most cells except erythrocytes.

The protein localises to the secreted. It carries out the reaction an acylcholine + H2O = a carboxylate + choline + H(+). Functionally, esterase with broad substrate specificity. Contributes to the inactivation of the neurotransmitter acetylcholine. Can degrade neurotoxic organophosphate esters. This Sus scrofa (Pig) protein is Cholinesterase (BCHE).